The sequence spans 154 residues: Terephthalate 1,2-dioxygenase, terminal oxygenase component subunit beta 1 (154 aa).

It belongs to the bacterial ring-hydroxylating dioxygenase beta subunit family. As to quaternary structure, heterotetramer composed of 2 alpha (TphA2I and TphA2II) and 2 beta (TphA3I and TphA3II) subunits. Part of a multicomponent enzyme system composed of a reductase (TphA1I or TphA1II) and a two-subunit oxygenase component (TphA2I or TphA2II and TphA3I or TphA3II). It depends on Fe cation as a cofactor.

It carries out the reaction terephthalate + NADH + O2 + H(+) = (3S,4R)-3,4-dihydroxycyclohexa-1,5-diene-1,4-dicarboxylate + NAD(+). With respect to regulation, inhibited by EDTA. Functionally, component of the terephthalate 1,2-dioxygenase multicomponent enzyme system which catalyzes the dioxygenation of terephthalate (TER/TPA) to 1,2-dihydroxy-3,5-cyclohexadiene-1,4-dicarboxylic acid (DCD). It can also use 2,5-dicarboxypyridine (PDC) and 1,4-napthalenedicarboxylic acid (NDC) as substrates, and preferentially uses NADPH which is the physiological electron donor. The chain is Terephthalate 1,2-dioxygenase, terminal oxygenase component subunit beta 1 (tphA3I) from Comamonas sp.